A 63-amino-acid polypeptide reads, in one-letter code: Large ribosomal subunit protein uL29 (63 aa).

Belongs to the universal ribosomal protein uL29 family.

The sequence is that of Large ribosomal subunit protein uL29 from Vibrio vulnificus (strain CMCP6).